The sequence spans 124 residues: Ribonuclease P protein component (124 aa).

Belongs to the RnpA family. In terms of assembly, consists of a catalytic RNA component (M1 or rnpB) and a protein subunit.

It carries out the reaction Endonucleolytic cleavage of RNA, removing 5'-extranucleotides from tRNA precursor.. Functionally, RNaseP catalyzes the removal of the 5'-leader sequence from pre-tRNA to produce the mature 5'-terminus. It can also cleave other RNA substrates such as 4.5S RNA. The protein component plays an auxiliary but essential role in vivo by binding to the 5'-leader sequence and broadening the substrate specificity of the ribozyme. In Synechocystis sp. (strain ATCC 27184 / PCC 6803 / Kazusa), this protein is Ribonuclease P protein component.